The following is a 334-amino-acid chain: MIEADRLIQPQLQGQDDVIDRAMRPKLLDEYTGQDDTRAQLKVFIQAAKNREEALDHMLIYGPPGLGKTTLAMIVANEMGVNIKSTSGPVLEKAGDLAALLTNLEAGDVLFIDEIHRLSPVVEEILYPAMEDYQLDIMIGEGPAARSIKLDLPPFTLVGATTRAGALTSPLRARFGIPLRLEFYNVKDLSTIVTRSAQVMGLAIDSEGATEIAKRSRGTPRIANRLLRRVRDYAEVKHDGAVTQKVAEQALDLLDVDGEGFDYMDRKLLLAIIDKFMGGPVGLDNLAAAIGEERETIEDVLEPFLIQQGFIQRTPRGRIATTRAYLHFGMIKPE.

The large ATPase domain (RuvB-L) stretch occupies residues 4–184 (ADRLIQPQLQ…FGIPLRLEFY (181 aa)). ATP-binding positions include arginine 24, glycine 65, lysine 68, threonine 69, threonine 70, 131-133 (EDY), arginine 174, tyrosine 184, and arginine 221. Threonine 69 serves as a coordination point for Mg(2+). A small ATPAse domain (RuvB-S) region spans residues 185–255 (NVKDLSTIVT…VAEQALDLLD (71 aa)). Residues 258 to 334 (GEGFDYMDRK…YLHFGMIKPE (77 aa)) are head domain (RuvB-H). Arginine 294, arginine 313, and arginine 318 together coordinate DNA.

It belongs to the RuvB family. Homohexamer. Forms an RuvA(8)-RuvB(12)-Holliday junction (HJ) complex. HJ DNA is sandwiched between 2 RuvA tetramers; dsDNA enters through RuvA and exits via RuvB. An RuvB hexamer assembles on each DNA strand where it exits the tetramer. Each RuvB hexamer is contacted by two RuvA subunits (via domain III) on 2 adjacent RuvB subunits; this complex drives branch migration. In the full resolvosome a probable DNA-RuvA(4)-RuvB(12)-RuvC(2) complex forms which resolves the HJ.

It localises to the cytoplasm. The enzyme catalyses ATP + H2O = ADP + phosphate + H(+). In terms of biological role, the RuvA-RuvB-RuvC complex processes Holliday junction (HJ) DNA during genetic recombination and DNA repair, while the RuvA-RuvB complex plays an important role in the rescue of blocked DNA replication forks via replication fork reversal (RFR). RuvA specifically binds to HJ cruciform DNA, conferring on it an open structure. The RuvB hexamer acts as an ATP-dependent pump, pulling dsDNA into and through the RuvAB complex. RuvB forms 2 homohexamers on either side of HJ DNA bound by 1 or 2 RuvA tetramers; 4 subunits per hexamer contact DNA at a time. Coordinated motions by a converter formed by DNA-disengaged RuvB subunits stimulates ATP hydrolysis and nucleotide exchange. Immobilization of the converter enables RuvB to convert the ATP-contained energy into a lever motion, pulling 2 nucleotides of DNA out of the RuvA tetramer per ATP hydrolyzed, thus driving DNA branch migration. The RuvB motors rotate together with the DNA substrate, which together with the progressing nucleotide cycle form the mechanistic basis for DNA recombination by continuous HJ branch migration. Branch migration allows RuvC to scan DNA until it finds its consensus sequence, where it cleaves and resolves cruciform DNA. This chain is Holliday junction branch migration complex subunit RuvB, found in Shewanella sp. (strain ANA-3).